The following is a 395-amino-acid chain: MPMNIVNMFGKYIKIIKWIGIASLIGIVGGLSSVIIAIIIEYFPEKHNVLLIPIVFFIAGLFVDYIYELKGSGIDRVLKALNTNEKLTWIRGLLKVLLAGAVIAVGGSAGKEGPCVQSSASFADELYRLLKLKNRELVIITGIAGGLGGAFSAPLGTAILACEIIEHENFNYINLIPPIIASVVGYLIFYLITGRKHLFNITLSYTINIHDFLLFILGAFFCSLIAHCYIKTYRKISSTFDNLKIPYCIKTLIGGILVAVISYFIPEVMGMGLTLTKELFIMEFSLVFLVLLLIGKILATSFTVGSGTPGGLVFPSMCIGAISGIIFGSLIGDCSAPYIVLGIATTLSATTNAPLGGAVLCTEIFGFDFAVPASIGAVIGYQMTKLETIFKYIRF.

A run of 10 helical transmembrane segments spans residues 19-39 (IGIA…IAII), 49-69 (VLLI…IYEL), 87-107 (LTWI…AVGG), 137-157 (LVII…PLGT), 172-192 (YINL…FYLI), 206-226 (TINI…SLIA), 252-272 (LIGG…MGMG), 279-299 (LFIM…KILA), 311-331 (GLVF…GSLI), and 359-379 (VLCT…GAVI).

The protein belongs to the chloride channel (TC 2.A.49) family.

Its subcellular location is the cell membrane. This is an uncharacterized protein from Methanocaldococcus jannaschii (strain ATCC 43067 / DSM 2661 / JAL-1 / JCM 10045 / NBRC 100440) (Methanococcus jannaschii).